A 308-amino-acid polypeptide reads, in one-letter code: CASP-like protein 4A2 (308 aa).

The segment at 1 to 135 (MALEAQPSPS…APAPAPRVPA (135 aa)) is disordered. Residues 1 to 161 (MALEAQPSPS…KRPTAVLQRT (161 aa)) lie on the Cytoplasmic side of the membrane. The span at 22-31 (GGAGAPGGSA) shows a compositional bias: gly residues. Residues 32 to 44 (GDADAQARRATSG) are compositionally biased toward low complexity. Pro residues-rich tracts occupy residues 54–65 (RRSPPPPFPRTP) and 89–132 (FQPP…PAPR). The helical transmembrane segment at 162 to 182 (ALVARVAAALLCLAALAVLAA) threads the bilayer. Topologically, residues 183 to 203 (DSRKGFALDSYSNYSQLRYSE) are extracellular. N-linked (GlcNAc...) asparagine glycosylation occurs at Asn-195. Residues 204–224 (AVNVIGFVYSVLQFFVLADLM) traverse the membrane as a helical segment. Topologically, residues 225 to 240 (RRNKHLNPRRKGDYFD) are cytoplasmic. A helical transmembrane segment spans residues 241 to 262 (FFMDQVLAYLLISSSSSATARV). Residues 263-280 (GDWIDNWGSDPFPKMANS) lie on the Extracellular side of the membrane. Residue Asn-279 is glycosylated (N-linked (GlcNAc...) asparagine). Residues 281–301 (SIAISFMAFLVFAISALISAY) traverse the membrane as a helical segment. Residues 302-308 (NLFRRDI) lie on the Cytoplasmic side of the membrane.

It belongs to the Casparian strip membrane proteins (CASP) family. Homodimer and heterodimers.

It is found in the cell membrane. The sequence is that of CASP-like protein 4A2 from Oryza sativa subsp. japonica (Rice).